Reading from the N-terminus, the 161-residue chain is MVIAVYPGTFDPMTRGHEDLVRRASNIFDELVVGVAHSPNKRPFFSLEERIGIAREVLGHYPNVRVEGFSGLLKDFVRNNNARVIVRGLRAVSDFEYEFQMAGMNRYLLPDVETMFLTPSDQYQFISGTFVREIAVLGGDVSKFVFPSVERWLQEKIGKPE.

T9 is a substrate binding site. ATP-binding positions include 9 to 10 (TF) and H17. Positions 41, 73, and 87 each coordinate substrate. Residues 88–90 (GLR), E98, and 123–129 (YQFISGT) contribute to the ATP site.

It belongs to the bacterial CoaD family. As to quaternary structure, homohexamer. It depends on Mg(2+) as a cofactor.

It localises to the cytoplasm. It carries out the reaction (R)-4'-phosphopantetheine + ATP + H(+) = 3'-dephospho-CoA + diphosphate. It functions in the pathway cofactor biosynthesis; coenzyme A biosynthesis; CoA from (R)-pantothenate: step 4/5. In terms of biological role, reversibly transfers an adenylyl group from ATP to 4'-phosphopantetheine, yielding dephospho-CoA (dPCoA) and pyrophosphate. The polypeptide is Phosphopantetheine adenylyltransferase (Cupriavidus necator (strain ATCC 17699 / DSM 428 / KCTC 22496 / NCIMB 10442 / H16 / Stanier 337) (Ralstonia eutropha)).